Reading from the N-terminus, the 63-residue chain is Cypmaclein (63 aa).

Belongs to the GASA family. In terms of tissue distribution, expressed in pollen (at protein level).

This is Cypmaclein from Juniperus ashei (Ozark white cedar).